Consider the following 289-residue polypeptide: 4-hydroxy-tetrahydrodipicolinate synthase (289 aa).

Threonine 43 contacts pyruvate. Residue tyrosine 131 is the Proton donor/acceptor of the active site. Lysine 160 acts as the Schiff-base intermediate with substrate in catalysis. Isoleucine 200 contributes to the pyruvate binding site.

Belongs to the DapA family. As to quaternary structure, homotetramer; dimer of dimers.

The protein resides in the cytoplasm. The catalysed reaction is L-aspartate 4-semialdehyde + pyruvate = (2S,4S)-4-hydroxy-2,3,4,5-tetrahydrodipicolinate + H2O + H(+). The protein operates within amino-acid biosynthesis; L-lysine biosynthesis via DAP pathway; (S)-tetrahydrodipicolinate from L-aspartate: step 3/4. Its function is as follows. Catalyzes the condensation of (S)-aspartate-beta-semialdehyde [(S)-ASA] and pyruvate to 4-hydroxy-tetrahydrodipicolinate (HTPA). This is 4-hydroxy-tetrahydrodipicolinate synthase from Methanococcus vannielii (strain ATCC 35089 / DSM 1224 / JCM 13029 / OCM 148 / SB).